The primary structure comprises 177 residues: Large ribosomal subunit protein uL6 (177 aa).

The protein belongs to the universal ribosomal protein uL6 family. As to quaternary structure, part of the 50S ribosomal subunit.

Its function is as follows. This protein binds to the 23S rRNA, and is important in its secondary structure. It is located near the subunit interface in the base of the L7/L12 stalk, and near the tRNA binding site of the peptidyltransferase center. This chain is Large ribosomal subunit protein uL6, found in Serratia proteamaculans (strain 568).